The following is a 378-amino-acid chain: Lipoyl synthase, mitochondrial (378 aa).

Residues Cys97, Cys102, Cys108, Cys128, Cys132, Cys135, and Ser343 each coordinate [4Fe-4S] cluster. In terms of domain architecture, Radical SAM core spans 111–332 (GSDKSAATAT…RQRALDMGFL (222 aa)).

This sequence belongs to the radical SAM superfamily. Lipoyl synthase family. It depends on [4Fe-4S] cluster as a cofactor.

Its subcellular location is the mitochondrion. The enzyme catalyses [[Fe-S] cluster scaffold protein carrying a second [4Fe-4S](2+) cluster] + N(6)-octanoyl-L-lysyl-[protein] + 2 oxidized [2Fe-2S]-[ferredoxin] + 2 S-adenosyl-L-methionine + 4 H(+) = [[Fe-S] cluster scaffold protein] + N(6)-[(R)-dihydrolipoyl]-L-lysyl-[protein] + 4 Fe(3+) + 2 hydrogen sulfide + 2 5'-deoxyadenosine + 2 L-methionine + 2 reduced [2Fe-2S]-[ferredoxin]. The protein operates within protein modification; protein lipoylation via endogenous pathway; protein N(6)-(lipoyl)lysine from octanoyl-[acyl-carrier-protein]: step 2/2. In terms of biological role, catalyzes the radical-mediated insertion of two sulfur atoms into the C-6 and C-8 positions of the octanoyl moiety bound to the lipoyl domains of lipoate-dependent enzymes, thereby converting the octanoylated domains into lipoylated derivatives. The sequence is that of Lipoyl synthase, mitochondrial from Phaeosphaeria nodorum (strain SN15 / ATCC MYA-4574 / FGSC 10173) (Glume blotch fungus).